The primary structure comprises 718 residues: Protein Hook homolog 3 (718 aa).

Methionine 1 is subject to N-acetylmethionine. Residues 1 to 164 (MFSVESLERA…QELMSKESPV (164 aa)) form a sufficient for interaction with microtubules region. Serine 3 and serine 6 each carry phosphoserine. The region spanning 10–126 (AELCESLLTW…RMLQLILGCA (117 aa)) is the Calponin-homology (CH) domain. Coiled-coil stretches lie at residues 167–433 (GNDA…VQAQ) and 462–667 (EIRE…YIVS). A Phosphoserine modification is found at serine 238. The tract at residues 553-718 (EKLHEANNEL…PGHVQPATAR (166 aa)) is required for association with Golgi. The interval 556-718 (HEANNELQKK…PGHVQPATAR (163 aa)) is required for interaction with MSR1. The disordered stretch occupies residues 682 to 718 (EDRLASTGSGQSFLARQRQATSSRRSYPGHVQPATAR). 2 positions are modified to phosphoserine: serine 693 and serine 707. Positions 696 to 707 (ARQRQATSSRRS) are enriched in low complexity.

The protein belongs to the hook family. In terms of assembly, self-associates. Component of the FTS/Hook/FHIP complex (FHF complex), composed of AKTIP/FTS, FHIP1B, and one or more members of the Hook family of proteins HOOK1, HOOK2, and HOOK3. May interact directly with AKTIP/FTS, HOOK1 and HOOK2. Associates with several subunits of the homotypic vesicular sorting complex (the HOPS complex) including VPS16 and VPS41; these interactions may be indirect. Interacts with MSR1, and this association is stimulated by ligand binding to MSR1. Interacts with microtubules. Part of a tripartite complex with dynein and dynactin, acts an adapter linking the dynein motor complex and dynactin. Interacts with dynein intermediate chain and dynactin (DCTN1). Interacts with CCDC181. Interacts with LRGUK. As to quaternary structure, (Microbial infection) Interacts with Salmonella typhimurium spiC.

Its subcellular location is the cytoplasm. It is found in the cytoskeleton. The protein localises to the golgi apparatus. Its function is as follows. Acts as an adapter protein linking the dynein motor complex to various cargos and converts dynein from a non-processive to a highly processive motor in the presence of dynactin. Facilitates the interaction between dynein and dynactin and activates dynein processivity (the ability to move along a microtubule for a long distance without falling off the track). Predominantly recruits 2 dyneins, which increases both the force and speed of the microtubule motor. Component of the FTS/Hook/FHIP complex (FHF complex). The FHF complex may function to promote vesicle trafficking and/or fusion via the homotypic vesicular protein sorting complex (the HOPS complex). May regulate clearance of endocytosed receptors such as MSR1. Participates in defining the architecture and localization of the Golgi complex. FHF complex promotes the distribution of AP-4 complex to the perinuclear area of the cell. Functionally, (Microbial infection) May serve as a target for the spiC protein from Salmonella typhimurium, which inactivates it, leading to a strong alteration in cellular trafficking. This chain is Protein Hook homolog 3, found in Homo sapiens (Human).